A 637-amino-acid chain; its full sequence is tRNA uridine 5-carboxymethylaminomethyl modification enzyme MnmG (637 aa).

18 to 23 is a binding site for FAD; sequence GAGHAG. 282–296 contributes to the NAD(+) binding site; sequence GPRYCPSIEDKIVRF.

This sequence belongs to the MnmG family. Homodimer. Heterotetramer of two MnmE and two MnmG subunits. Requires FAD as cofactor.

It localises to the cytoplasm. In terms of biological role, NAD-binding protein involved in the addition of a carboxymethylaminomethyl (cmnm) group at the wobble position (U34) of certain tRNAs, forming tRNA-cmnm(5)s(2)U34. This is tRNA uridine 5-carboxymethylaminomethyl modification enzyme MnmG from Pediococcus pentosaceus (strain ATCC 25745 / CCUG 21536 / LMG 10740 / 183-1w).